A 254-amino-acid polypeptide reads, in one-letter code: 5'-nucleotidase SurE (254 aa).

A divalent metal cation-binding residues include D8, D9, S38, and N91.

Belongs to the SurE nucleotidase family. Requires a divalent metal cation as cofactor.

The protein localises to the cytoplasm. The enzyme catalyses a ribonucleoside 5'-phosphate + H2O = a ribonucleoside + phosphate. Its function is as follows. Nucleotidase that shows phosphatase activity on nucleoside 5'-monophosphates. In Anaeromyxobacter dehalogenans (strain 2CP-C), this protein is 5'-nucleotidase SurE.